A 72-amino-acid polypeptide reads, in one-letter code: Translation initiation factor IF-1 (72 aa).

One can recognise an S1-like domain in the interval 1-72 (MAKEDSIEMQ…SKGRIVFRAR (72 aa)).

This sequence belongs to the IF-1 family. Component of the 30S ribosomal translation pre-initiation complex which assembles on the 30S ribosome in the order IF-2 and IF-3, IF-1 and N-formylmethionyl-tRNA(fMet); mRNA recruitment can occur at any time during PIC assembly.

The protein localises to the cytoplasm. One of the essential components for the initiation of protein synthesis. Stabilizes the binding of IF-2 and IF-3 on the 30S subunit to which N-formylmethionyl-tRNA(fMet) subsequently binds. Helps modulate mRNA selection, yielding the 30S pre-initiation complex (PIC). Upon addition of the 50S ribosomal subunit IF-1, IF-2 and IF-3 are released leaving the mature 70S translation initiation complex. This is Translation initiation factor IF-1 from Psychromonas ingrahamii (strain DSM 17664 / CCUG 51855 / 37).